Consider the following 657-residue polypeptide: PAN2-PAN3 deadenylation complex subunit PAN3 (657 aa).

3 disordered regions span residues 1-29 (MASA…HAKD), 52-98 (HDPS…SATI), and 115-135 (SRSN…EWSI). Residues 27-55 (AKDTLCRNVTIYGRCRYEDKGCVFNHDPS) form a C3H1-type zinc finger. The segment covering 52–67 (HDPSRVNDAQHPERSS) has biased composition (basic and acidic residues). Composition is skewed to polar residues over residues 75-98 (DSPS…SATI) and 115-132 (SRSN…STPE). The pseudokinase domain stretch occupies residues 259 to 521 (QTLPNSQLPT…TIDIFISGIS (263 aa)). Residues Arg-311, 360–367 (DYHPLSKT), and 421–422 (SK) contribute to the ATP site. The stretch at 522–560 (SQLMSTFDSSLHLDDQLISDLSRELENARLVRLLTKLNF) forms a coiled coil. Positions 561-657 (INERPEYEHD…QALLKPARRI (97 aa)) are knob domain.

It belongs to the protein kinase superfamily. PAN3 family. Homodimer. Forms a heterotrimer with a catalytic subunit PAN2 to form the poly(A)-nuclease (PAN) deadenylation complex. Interacts (via PAM-2 motif) with poly(A)-binding protein PAB1 (via PABC domain), conferring substrate specificity of the enzyme complex.

It localises to the cytoplasm. Its function is as follows. Regulatory subunit of the poly(A)-nuclease (PAN) deadenylation complex, one of two cytoplasmic mRNA deadenylases involved in mRNA turnover. PAN specifically shortens poly(A) tails of RNA and the activity is stimulated by poly(A)-binding protein PAB1. PAN deadenylation is followed by rapid degradation of the shortened mRNA tails by the CCR4-NOT complex. Deadenylated mRNAs are then degraded by two alternative mechanisms, namely exosome-mediated 3'-5' exonucleolytic degradation, or deadenylation-dependent mRNA decaping and subsequent 5'-3' exonucleolytic degradation by XRN1. May also be involved in post-transcriptional maturation of mRNA poly(A) tails. PAN3 acts as a positive regulator for PAN activity, recruiting the catalytic subunit PAN2 to mRNA via its interaction with RNA and with PAB1. This chain is PAN2-PAN3 deadenylation complex subunit PAN3, found in Coccidioides immitis (strain RS) (Valley fever fungus).